Here is a 39-residue protein sequence, read N- to C-terminus: Conotoxin Cl14.5 (39 aa).

A propeptide spanning residues 1-16 (PVNEAGVERLFRALVG) is cleaved from the precursor. At Pro38 the chain carries Proline amide.

Contains 2 disulfide bonds. Expressed by the venom duct.

The protein resides in the secreted. This is Conotoxin Cl14.5 from Californiconus californicus (California cone).